We begin with the raw amino-acid sequence, 145 residues long: uncharacterized protein (145 aa).

A helical membrane pass occupies residues 63-83 (FLCLPLFLSFLVANLILWLSF).

The protein resides in the mitochondrion membrane. This is an uncharacterized protein from Arabidopsis thaliana (Mouse-ear cress).